The sequence spans 502 residues: ATP synthase subunit alpha (502 aa).

169–176 contributes to the ATP binding site; sequence GDRQTGKT.

It belongs to the ATPase alpha/beta chains family. As to quaternary structure, F-type ATPases have 2 components, CF(1) - the catalytic core - and CF(0) - the membrane proton channel. CF(1) has five subunits: alpha(3), beta(3), gamma(1), delta(1), epsilon(1). CF(0) has three main subunits: a(1), b(2) and c(9-12). The alpha and beta chains form an alternating ring which encloses part of the gamma chain. CF(1) is attached to CF(0) by a central stalk formed by the gamma and epsilon chains, while a peripheral stalk is formed by the delta and b chains.

Its subcellular location is the cell inner membrane. The enzyme catalyses ATP + H2O + 4 H(+)(in) = ADP + phosphate + 5 H(+)(out). Its function is as follows. Produces ATP from ADP in the presence of a proton gradient across the membrane. The alpha chain is a regulatory subunit. The sequence is that of ATP synthase subunit alpha from Citrifermentans bemidjiense (strain ATCC BAA-1014 / DSM 16622 / JCM 12645 / Bem) (Geobacter bemidjiensis).